The chain runs to 284 residues: Nucleotide-binding protein CPS_4546 (284 aa).

Gly8–Ser15 serves as a coordination point for ATP. Asp56–Asn59 is a GTP binding site.

It belongs to the RapZ-like family.

In terms of biological role, displays ATPase and GTPase activities. This Colwellia psychrerythraea (strain 34H / ATCC BAA-681) (Vibrio psychroerythus) protein is Nucleotide-binding protein CPS_4546.